The sequence spans 178 residues: Ribosome maturation factor RimM (178 aa).

Residues Ala101–Phe178 form the PRC barrel domain.

Belongs to the RimM family. Binds ribosomal protein uS19.

Its subcellular location is the cytoplasm. In terms of biological role, an accessory protein needed during the final step in the assembly of 30S ribosomal subunit, possibly for assembly of the head region. Essential for efficient processing of 16S rRNA. May be needed both before and after RbfA during the maturation of 16S rRNA. It has affinity for free ribosomal 30S subunits but not for 70S ribosomes. The sequence is that of Ribosome maturation factor RimM from Pseudomonas fluorescens (strain Pf0-1).